The chain runs to 257 residues: uncharacterized protein (257 aa).

This is an uncharacterized protein from Dictyostelium discoideum (Social amoeba).